Consider the following 263-residue polypeptide: HTH-type transcriptional repressor NanR (263 aa).

The 69-residue stretch at 30-98 (KKLSEMVEEE…NGERARVSRP (69 aa)) folds into the HTH gntR-type domain. The H-T-H motif DNA-binding region spans 58 to 77 (ERELMAFFNVGRPSVREALA).

It belongs to the NanR family.

In terms of biological role, transcriptional repressor that controls expression of the genes required for the catabolism of sialic acids. The polypeptide is HTH-type transcriptional repressor NanR (Salmonella arizonae (strain ATCC BAA-731 / CDC346-86 / RSK2980)).